The sequence spans 234 residues: Protein UL20 homolog (234 aa).

The next 4 membrane-spanning stretches (helical) occupy residues 82–102 (VVLF…IFLF), 112–132 (FLIL…LEMY), 153–173 (IGAL…NMIF), and 191–211 (TSGF…ITSI).

The protein belongs to the alphaherpesvirinae UL20 family. As to quaternary structure, interacts with gK (via N-terminus); this interaction plays a role in the coordinate transport of UL20 and gK to the trans-Golgi network (TGN), and is required for their cell surface expression. Interacts with gB.

The protein localises to the virion. Its subcellular location is the host cell membrane. The protein resides in the host endosome membrane. It localises to the host Golgi apparatus membrane. It is found in the host nucleus membrane. Functionally, plays an essential role in egress of virus particles from the nucleus, cytoplasmic envelopment and virus-induced cell fusion. Forms a functional protein complex with gK and this interaction is absolutely essential for their coordinate intracellular transport, gK glycosylation, expression on host cell surface, and function. Together, they modulate gB-mediated virus-induced cell fusion and virion egress and therefore actively participate in these processes. This is Protein UL20 homolog (MDV032) from Gallid herpesvirus 2 (strain Chicken/Md5/ATCC VR-987) (GaHV-2).